Reading from the N-terminus, the 345-residue chain is Methylthioribose-1-phosphate isomerase (345 aa).

Substrate-binding positions include R44–A46, R86, and Q194. The active-site Proton donor is the D235. N245 to K246 is a substrate binding site.

Belongs to the eIF-2B alpha/beta/delta subunits family. MtnA subfamily.

It carries out the reaction 5-(methylsulfanyl)-alpha-D-ribose 1-phosphate = 5-(methylsulfanyl)-D-ribulose 1-phosphate. Its pathway is amino-acid biosynthesis; L-methionine biosynthesis via salvage pathway; L-methionine from S-methyl-5-thio-alpha-D-ribose 1-phosphate: step 1/6. Functionally, catalyzes the interconversion of methylthioribose-1-phosphate (MTR-1-P) into methylthioribulose-1-phosphate (MTRu-1-P). The protein is Methylthioribose-1-phosphate isomerase of Desulfitobacterium hafniense (strain Y51).